We begin with the raw amino-acid sequence, 63 residues long: Large ribosomal subunit protein bL32 (63 aa).

Belongs to the bacterial ribosomal protein bL32 family.

This is Large ribosomal subunit protein bL32 (rpmF) from Aquifex aeolicus (strain VF5).